The following is a 236-amino-acid chain: uncharacterized protein (236 aa).

The helical transmembrane segment at 52 to 72 (FFPYIALFQIIMLIILLILYF) threads the bilayer. Residues 183-236 (SDKREHDDEELSFTTEMETITTETETSSTIPHLRSLPIKSESSMETTSEETDEE) form a disordered region. The segment covering 196-212 (TTEMETITTETETSSTI) has biased composition (low complexity).

The protein localises to the membrane. This is an uncharacterized protein from Acheta domesticus (House cricket).